We begin with the raw amino-acid sequence, 182 residues long: Probable tryptophan transport protein (182 aa).

4 helical membrane-spanning segments follow: residues 10–32 (ITINALLLAIGVILHQITPVLGL), 55–75 (ITMVSGTLMGIFTAMTTKFPG), 119–141 (IVLPLGTLVSGILFLGTAKIIVG), and 146–168 (FSILFLTVVVPSVALNTVIGLVL).

The protein belongs to the vitamin uptake transporter (VUT/ECF) (TC 2.A.88) family. TrpP subfamily.

The protein resides in the cell membrane. In terms of biological role, probably involved in tryptophan uptake. The protein is Probable tryptophan transport protein (trpP) of Clostridium perfringens (strain 13 / Type A).